Reading from the N-terminus, the 259-residue chain is Ribonuclease PH (259 aa).

Residues arginine 88 and 126–128 (GTR) each bind phosphate.

The protein belongs to the RNase PH family. As to quaternary structure, homohexameric ring arranged as a trimer of dimers.

It catalyses the reaction tRNA(n+1) + phosphate = tRNA(n) + a ribonucleoside 5'-diphosphate. Its function is as follows. Phosphorolytic 3'-5' exoribonuclease that plays an important role in tRNA 3'-end maturation. Removes nucleotide residues following the 3'-CCA terminus of tRNAs; can also add nucleotides to the ends of RNA molecules by using nucleoside diphosphates as substrates, but this may not be physiologically important. Probably plays a role in initiation of 16S rRNA degradation (leading to ribosome degradation) during starvation. This is Ribonuclease PH from Mycobacterium leprae (strain Br4923).